Here is a 336-residue protein sequence, read N- to C-terminus: Transmembrane protein 120A (336 aa).

Topologically, residues 1–131 (MNSPALQDCV…KQSKFAYKDE (131 aa)) are cytoplasmic. K129 is a binding site for CoA. A helical membrane pass occupies residues 132–151 (YEKFKLYLTMILMVLSFICR). Over 152–157 (FVLNSR) the chain is Extracellular. A helical transmembrane segment spans residues 158–176 (VTDAVFNFLLVWYYCTLTI). The Cytoplasmic portion of the chain corresponds to 177–189 (RESILINNGSRIK). CoA contacts are provided by S186 and R187. A helical membrane pass occupies residues 190 to 208 (GWWVLNHYISTFLSGVMLT). Residues 209-217 (WPDGLMYQM) are Extracellular-facing. Residues 218–239 (FRNQFLSFSMYQSFVQFLQYYY) traverse the membrane as a helical segment. Residues Q236, Y239, and Q240 each contribute to the CoA site. The Cytoplasmic segment spans residues 240–269 (QSGCLYRLRALGERHNMDLTVEGFQSWMWR). The chain crosses the membrane as a helical span at residues 270 to 293 (GLTFLLPFLFFGQFWQLYNAITLF). Residues 294-303 (KLARHPECKE) lie on the Extracellular side of the membrane. The helical transmembrane segment at 304–329 (WQVIMCGLPFLVHFLGNFFTTLRVVH) threads the bilayer. Residues 330-336 (QKFQKQN) are Cytoplasmic-facing. K331 provides a ligand contact to CoA.

It belongs to the TMEM120 family. Homodimer.

The protein resides in the cell membrane. It localises to the nucleus inner membrane. The protein localises to the endoplasmic reticulum. Functionally, multifunctional protein involved in mechanosensation, and plays an essential role in lipid metabolism. May function as a potential ion channel involved in sensing mechanical stimuli. TMEM120A is structurally similar to a lipid-modifying enzyme, ELOVL7, and contains a bound coenzyme A molecule, which suggests it might function as an enzyme in lipid metabolism. The polypeptide is Transmembrane protein 120A (Xenopus tropicalis (Western clawed frog)).